The chain runs to 161 residues: Type II secretion system protein M (161 aa).

The Cytoplasmic segment spans residues 1–16 (MNELRRRWQVMSQRER). Residues 17-37 (LMALACGGLVVLCLLYYLIWA) form a helical membrane-spanning segment. The Periplasmic segment spans residues 38-161 (PWQESVRQWQ…VTRLSLERVL (124 aa)).

This sequence belongs to the GSP M family. In terms of assembly, type II secretion system is composed of four main components: the outer membrane complex, the inner membrane complex, the cytoplasmic secretion ATPase and the periplasm-spanning pseudopilus. Forms homodimers. Interacts with OutL/GspL. Interacts with OutE/GspE and OutF/GspF.

It is found in the cell inner membrane. Functionally, inner membrane component of the type II secretion system required for the energy-dependent secretion of extracellular factors such as proteases and toxins from the periplasm. Plays a role in the complex assembly and recruits OutL resulting in a stable complex in the inner membrane. Provides thus a link between the energy-providing OutE protein in the cytoplasm and the rest of the T2SS machinery. This Dickeya chrysanthemi (Pectobacterium chrysanthemi) protein is Type II secretion system protein M (outM).